The following is a 383-amino-acid chain: tRNA-specific 2-thiouridylase MnmA (383 aa).

ATP contacts are provided by residues 10 to 17 (AMSGGVDS) and M36. C107 acts as the Nucleophile in catalysis. C107 and C206 are oxidised to a cystine. G131 is a binding site for ATP. The tract at residues 155–157 (KDQ) is interaction with tRNA. The active-site Cysteine persulfide intermediate is the C206. An interaction with tRNA region spans residues 315 to 316 (RY).

The protein belongs to the MnmA/TRMU family.

Its subcellular location is the cytoplasm. It catalyses the reaction S-sulfanyl-L-cysteinyl-[protein] + uridine(34) in tRNA + AH2 + ATP = 2-thiouridine(34) in tRNA + L-cysteinyl-[protein] + A + AMP + diphosphate + H(+). Its function is as follows. Catalyzes the 2-thiolation of uridine at the wobble position (U34) of tRNA, leading to the formation of s(2)U34. The protein is tRNA-specific 2-thiouridylase MnmA of Salinibacter ruber (strain DSM 13855 / M31).